The following is a 241-amino-acid chain: LexA repressor (241 aa).

The segment at residues 41–61 (FREIGNAAGLKSPSSVKHQLQ) is a DNA-binding region (H-T-H motif). Active-site for autocatalytic cleavage activity residues include S165 and K202.

Belongs to the peptidase S24 family. Homodimer.

It catalyses the reaction Hydrolysis of Ala-|-Gly bond in repressor LexA.. Its function is as follows. Represses a number of genes involved in the response to DNA damage (SOS response), including recA and lexA. In the presence of single-stranded DNA, RecA interacts with LexA causing an autocatalytic cleavage which disrupts the DNA-binding part of LexA, leading to derepression of the SOS regulon and eventually DNA repair. This chain is LexA repressor, found in Bifidobacterium longum subsp. infantis (strain ATCC 15697 / DSM 20088 / JCM 1222 / NCTC 11817 / S12).